The primary structure comprises 586 residues: Aspartate--tRNA(Asp/Asn) ligase (586 aa).

Glu172 is an L-aspartate binding site. Residues 196–199 form an aspartate region; the sequence is QLYK. Arg218 lines the L-aspartate pocket. Residues 218–220 and Gln227 contribute to the ATP site; that span reads RDE. L-aspartate is bound at residue His446. Glu480 contributes to the ATP binding site. Arg487 provides a ligand contact to L-aspartate. Residue 532 to 535 coordinates ATP; sequence GIDR.

The protein belongs to the class-II aminoacyl-tRNA synthetase family. Type 1 subfamily. Homodimer.

Its subcellular location is the cytoplasm. The enzyme catalyses tRNA(Asx) + L-aspartate + ATP = L-aspartyl-tRNA(Asx) + AMP + diphosphate. In terms of biological role, aspartyl-tRNA synthetase with relaxed tRNA specificity since it is able to aspartylate not only its cognate tRNA(Asp) but also tRNA(Asn). Reaction proceeds in two steps: L-aspartate is first activated by ATP to form Asp-AMP and then transferred to the acceptor end of tRNA(Asp/Asn). In Borrelia garinii subsp. bavariensis (strain ATCC BAA-2496 / DSM 23469 / PBi) (Borreliella bavariensis), this protein is Aspartate--tRNA(Asp/Asn) ligase.